The chain runs to 157 residues: Large ribosomal subunit protein eL24 (157 aa).

The disordered stretch occupies residues 94 to 157; that stretch reads RNQKPEVRKA…ISAPRVGGKR (64 aa). Residues 96 to 117 are compositionally biased toward basic and acidic residues; the sequence is QKPEVRKAQREQAIRAAKEAKK. The segment covering 123 to 140 has biased composition (low complexity); that stretch reads KKPAAPSAKASTKTAQKP.

It belongs to the eukaryotic ribosomal protein eL24 family. Component of the large ribosomal subunit.

It is found in the cytoplasm. Its function is as follows. Component of the large ribosomal subunit. The ribosome is a large ribonucleoprotein complex responsible for the synthesis of proteins in the cell. This chain is Large ribosomal subunit protein eL24 (rpl24), found in Pagrus major (Red sea bream).